Consider the following 356-residue polypeptide: Nitrilase, arylacetone-specific (356 aa).

Positions valine 7 to methionine 280 constitute a CN hydrolase domain. The Proton acceptor role is filled by glutamate 47. Lysine 129 (proton donor) is an active-site residue. Cysteine 163 serves as the catalytic Nucleophile. Residues glutamine 324–serine 356 form a disordered region. Polar residues predominate over residues valine 332–serine 356.

Belongs to the carbon-nitrogen hydrolase superfamily. Nitrilase family. As to quaternary structure, homohexamer.

The catalysed reaction is a nitrile + 2 H2O = a carboxylate + NH4(+). Its function is as follows. Nitrilase that acts mostly on arylacetonitriles. This chain is Nitrilase, arylacetone-specific, found in Alcaligenes faecalis.